The chain runs to 266 residues: ATP synthase subunit a (266 aa).

6 helical membrane-spanning segments follow: residues 38–58, 99–119, 126–146, 162–182, 191–211, and 224–244; these read KQMLLVILSVVIIATFFLLAA, LLFSLFFFILVNNIYGAIPLI, HVGGAYVLAAIVYLTWIAIGV, GVPVYILPIVIPIEIISNFLV, LFATMLAGHLIVMIAGSGIEY, and SVLVLVGAIAMYMLEALIMAL.

It belongs to the ATPase A chain family. F-type ATPases have 2 components, CF(1) - the catalytic core - and CF(0) - the membrane proton channel. CF(1) has five subunits: alpha(3), beta(3), gamma(1), delta(1), epsilon(1). CF(0) has three main subunits: a(1), b(2) and c(9-12). The alpha and beta chains form an alternating ring which encloses part of the gamma chain. CF(1) is attached to CF(0) by a central stalk formed by the gamma and epsilon chains, while a peripheral stalk is formed by the delta and b chains.

The protein resides in the cell membrane. Key component of the proton channel; it plays a direct role in the translocation of protons across the membrane. This chain is ATP synthase subunit a, found in Arthrobacter sp. (strain FB24).